Reading from the N-terminus, the 510-residue chain is ATP synthase subunit alpha (510 aa).

ATP is bound at residue 169–176 (GDRQTGKT).

This sequence belongs to the ATPase alpha/beta chains family. In terms of assembly, F-type ATPases have 2 components, CF(1) - the catalytic core - and CF(0) - the membrane proton channel. CF(1) has five subunits: alpha(3), beta(3), gamma(1), delta(1), epsilon(1). CF(0) has three main subunits: a(1), b(2) and c(9-12). The alpha and beta chains form an alternating ring which encloses part of the gamma chain. CF(1) is attached to CF(0) by a central stalk formed by the gamma and epsilon chains, while a peripheral stalk is formed by the delta and b chains.

The protein resides in the cell inner membrane. It catalyses the reaction ATP + H2O + 4 H(+)(in) = ADP + phosphate + 5 H(+)(out). Functionally, produces ATP from ADP in the presence of a proton gradient across the membrane. The alpha chain is a regulatory subunit. The sequence is that of ATP synthase subunit alpha from Azorhizobium caulinodans (strain ATCC 43989 / DSM 5975 / JCM 20966 / LMG 6465 / NBRC 14845 / NCIMB 13405 / ORS 571).